A 158-amino-acid chain; its full sequence is NAD(P)H-quinone oxidoreductase subunit J, chloroplastic (158 aa).

The protein belongs to the complex I 30 kDa subunit family. In terms of assembly, NDH is composed of at least 16 different subunits, 5 of which are encoded in the nucleus.

It localises to the plastid. Its subcellular location is the chloroplast thylakoid membrane. The catalysed reaction is a plastoquinone + NADH + (n+1) H(+)(in) = a plastoquinol + NAD(+) + n H(+)(out). It carries out the reaction a plastoquinone + NADPH + (n+1) H(+)(in) = a plastoquinol + NADP(+) + n H(+)(out). Its function is as follows. NDH shuttles electrons from NAD(P)H:plastoquinone, via FMN and iron-sulfur (Fe-S) centers, to quinones in the photosynthetic chain and possibly in a chloroplast respiratory chain. The immediate electron acceptor for the enzyme in this species is believed to be plastoquinone. Couples the redox reaction to proton translocation, and thus conserves the redox energy in a proton gradient. The polypeptide is NAD(P)H-quinone oxidoreductase subunit J, chloroplastic (Illicium oligandrum (Star anise)).